Consider the following 112-residue polypeptide: Divalent-cation tolerance protein CutA (112 aa).

Residues Cys16, His83, and His84 each coordinate Cu cation.

It belongs to the CutA family. In terms of assembly, homotrimer. The cofactor is Cu cation.

Its subcellular location is the cytoplasm. In terms of biological role, involved in resistance toward heavy metals. The protein is Divalent-cation tolerance protein CutA of Shigella flexneri.